The chain runs to 353 residues: Rhodopsin (353 aa).

Residues 1-36 (MNGTEGPYFYIPMVNTTGIVRSPYEYPQYYLVNPAA) are Extracellular-facing. N-linked (GlcNAc...) asparagine glycosylation is found at N2 and N15. Residues 37–61 (YAALGAYMFLLILVGFPINFLTLYV) form a helical membrane-spanning segment. Residues 62–73 (TIEHKKLRTPLN) are Cytoplasmic-facing. Residues 74–96 (YILLNLAVANLFMVFGGFTTTMY) traverse the membrane as a helical segment. The Extracellular segment spans residues 97–110 (TSMHGYFVLGRLGC). C110 and C187 form a disulfide bridge. Residues 111–133 (NLEGFFATLGGEIALWSLVVLAI) form a helical membrane-spanning segment. A 'Ionic lock' involved in activated form stabilization motif is present at residues 134 to 136 (ERW). Over 134–152 (ERWMVVCKPISNFRFGEDH) the chain is Cytoplasmic. The chain crosses the membrane as a helical span at residues 153 to 173 (AIMGLAFTWVMAAACAVPPLV). The Extracellular segment spans residues 174–202 (GWSRYIPEGMQCSCGIDYYTRAEGFNNES). N-linked (GlcNAc...) asparagine glycosylation occurs at N200. A helical membrane pass occupies residues 203–224 (FVIYMFVCHFLIPLVVVFFCYG). Over 225–252 (RLLCAVKEAAAAQQESETTQRAEREVSR) the chain is Cytoplasmic. Residues 253–274 (MVVIMVVAFLICWCPYAGVAWY) form a helical membrane-spanning segment. At 275-286 (IFTHQGSEFGPL) the chain is on the extracellular side. Residues 287-308 (FMTFPAFFAKSSSIYNPMIYIC) form a helical membrane-spanning segment. K296 bears the N6-(retinylidene)lysine mark. Over 309-353 (MNKQFRHCMITTLCCGKNPFEEEEGASTTSKTEASSVSSSSVSPA) the chain is Cytoplasmic. 2 S-palmitoyl cysteine lipidation sites follow: C322 and C323. Positions 330–353 (EEEGASTTSKTEASSVSSSSVSPA) are disordered. A compositionally biased stretch (low complexity) spans 334 to 353 (ASTTSKTEASSVSSSSVSPA).

It belongs to the G-protein coupled receptor 1 family. Opsin subfamily. Post-translationally, phosphorylated on some or all of the serine and threonine residues present in the C-terminal region. In terms of processing, contains one covalently linked retinal chromophore.

It localises to the membrane. Its subcellular location is the cell projection. The protein localises to the cilium. It is found in the photoreceptor outer segment. Functionally, photoreceptor required for image-forming vision at low light intensity. While most salt water fish species use retinal as chromophore, most freshwater fish use 3-dehydroretinal, or a mixture of retinal and 3-dehydroretinal. Light-induced isomerization of 11-cis to all-trans retinal triggers a conformational change that activates signaling via G-proteins. Subsequent receptor phosphorylation mediates displacement of the bound G-protein alpha subunit by arrestin and terminates signaling. This Chelon saliens (Leaping mullet) protein is Rhodopsin (rho).